The following is a 66-amino-acid chain: uncharacterized protein (66 aa).

Positions 1 to 19 (MRRLYRHLASFFLLPSCPG) are cleaved as a signal peptide.

This is an uncharacterized protein from Saccharomyces cerevisiae (strain ATCC 204508 / S288c) (Baker's yeast).